A 306-amino-acid chain; its full sequence is Tyrosine recombinase XerC (306 aa).

The Core-binding (CB) domain occupies 6–92 (NTLYLQTKPY…ALRQWFSYLI (87 aa)). The Tyr recombinase domain occupies 113 to 292 (RLPKNIDAEQ…DFQHLAKIYD (180 aa)). Catalysis depends on residues Arg-152, Lys-176, His-244, Arg-247, and His-270. The active-site O-(3'-phospho-DNA)-tyrosine intermediate is the Tyr-279.

It belongs to the 'phage' integrase family. XerC subfamily. As to quaternary structure, forms a cyclic heterotetrameric complex composed of two molecules of XerC and two molecules of XerD.

The protein resides in the cytoplasm. Its function is as follows. Site-specific tyrosine recombinase, which acts by catalyzing the cutting and rejoining of the recombining DNA molecules. The XerC-XerD complex is essential to convert dimers of the bacterial chromosome into monomers to permit their segregation at cell division. It also contributes to the segregational stability of plasmids. The protein is Tyrosine recombinase XerC of Actinobacillus pleuropneumoniae serotype 7 (strain AP76).